The following is a 96-amino-acid chain: MNIRPLHDRVIVKRLEVESKSAGGIVLTGSAAEKSTRGEILAVGNGRLLENGTVKPLDVKVGDVVIFNEGYGVKKEKIDGEEVLILSEADLMAVVG.

The protein belongs to the GroES chaperonin family. In terms of assembly, heptamer of 7 subunits arranged in a ring. Interacts with the chaperonin GroEL.

The protein resides in the cytoplasm. Its function is as follows. Together with the chaperonin GroEL, plays an essential role in assisting protein folding. The GroEL-GroES system forms a nano-cage that allows encapsulation of the non-native substrate proteins and provides a physical environment optimized to promote and accelerate protein folding. GroES binds to the apical surface of the GroEL ring, thereby capping the opening of the GroEL channel. The sequence is that of Co-chaperonin GroES from Shewanella denitrificans (strain OS217 / ATCC BAA-1090 / DSM 15013).